A 618-amino-acid chain; its full sequence is Probable Xaa-Pro aminopeptidase P (618 aa).

The Mn(2+) site is built by Asp414, Asp425, Glu523, and Glu537.

The protein belongs to the peptidase M24B family. Mn(2+) is required as a cofactor.

The catalysed reaction is Release of any N-terminal amino acid, including proline, that is linked to proline, even from a dipeptide or tripeptide.. Catalyzes the removal of a penultimate prolyl residue from the N-termini of peptides. The protein is Probable Xaa-Pro aminopeptidase P (AMPP) of Metarhizium robertsii (strain ARSEF 23 / ATCC MYA-3075) (Metarhizium anisopliae (strain ARSEF 23)).